The chain runs to 877 residues: MAKKRIYEVAKEVGVDNKVVVQKAKDLGFDVKNHMSSIDDSQVAKLKSSFQNSAPAEKKAEKSATKNNKIKISVSSIRKNEKKPEENNTPKKSNRRRNNKRRSSDRARDNKERDAKSNTGRPKAAALLQQFKQKQRAEEGQLNREAQKAKKEYHEHLKHPKKEQSEKDNKKTVKESNNKKVEQQVEKKVIGPKILKPSPARLKKNQPADNKEKVTTPRVTIPEAPKEEKRGNGRGRNMGKPGRKGKNQFVNGHSERSDRSERKRRKNKKHQQEQQKPRKQITKRKERPLPDILVYEEGMNAQDIGKLIHREPAEIVKKLFMLGVMTNQNQSLDKDTIELLAAEYGIDAKQKVHEDISDIDTLYDKRMEASKKSKNQIKRPPVVTIMGHVDHGKTTLLDRLRHTHVSAHEAGGITQRIGAYQVRLDDRLITFLDTPGHAAFSNMRARGAEITDIVVLVVAADDGVMPQTVEAIDHAKSANVPIIVAINKMDKPGANPQHVTEELMKYNLIPEDYGGDTIFVNISAKTGQNVDDLLQMILLQADVMELKANPDEMAIGTVIEARLSRGRGPVADVLIQQGTLNIGDPIVVGDTFGRVRTMTNDRGRQVKKATPSEPVEITGLNDVPESADKLVEFKDEKTARSVGEARAQQSLQKSRENVQHVTLDNLFDTMKKENMKEVDIVLKADVQGSVEALQQSLEKIEVEGVRVNIIHSGVGAINESDVTLAGASNAFIIGFNVRPTATAKSQAETDGVDIRLYSIIYKAIDDVTAAMKGMLEPTYEEKVIGNLTVRETWKVSKVGTIAGSFVDKGIVKNDSKIRVIRDGIVKYDGEIASLKRFKDDVKEVKQGNDCGLTIKDYNDIKVGDEFEVYEMQQVEPK.

A disordered region spans residues 48 to 289 (SSFQNSAPAE…QITKRKERPL (242 aa)). The span at 78–89 (RKNEKKPEENNT) shows a compositional bias: basic and acidic residues. Basic residues predominate over residues 92-101 (KSNRRRNNKR). Over residues 102-116 (RSSDRARDNKERDAK) the composition is skewed to basic and acidic residues. The segment covering 123–132 (KAAALLQQFK) has biased composition (low complexity). 2 stretches are compositionally biased toward basic and acidic residues: residues 135–155 (QRAEEGQLNREAQKAKKEYHE) and 162–189 (KEQSEKDNKKTVKESNNKKVEQQVEKKV). Positions 277–286 (PRKQITKRKE) are enriched in basic residues. The region spanning 378 to 547 (KRPPVVTIMG…LLQADVMELK (170 aa)) is the tr-type G domain. Positions 387–394 (GHVDHGKT) are G1. 387–394 (GHVDHGKT) contributes to the GTP binding site. The tract at residues 412–416 (GITQR) is G2. The interval 433–436 (DTPG) is G3. GTP is bound by residues 433–437 (DTPGH) and 487–490 (NKMD). A G4 region spans residues 487–490 (NKMD). The segment at 523–525 (SAK) is G5.

Belongs to the TRAFAC class translation factor GTPase superfamily. Classic translation factor GTPase family. IF-2 subfamily.

It is found in the cytoplasm. In terms of biological role, one of the essential components for the initiation of protein synthesis. Protects formylmethionyl-tRNA from spontaneous hydrolysis and promotes its binding to the 30S ribosomal subunits. Also involved in the hydrolysis of GTP during the formation of the 70S ribosomal complex. This is Translation initiation factor IF-2 from Lactobacillus acidophilus (strain ATCC 700396 / NCK56 / N2 / NCFM).